The primary structure comprises 95 residues: Large ribosomal subunit protein uL23 (95 aa).

The protein belongs to the universal ribosomal protein uL23 family. In terms of assembly, part of the 50S ribosomal subunit. Contacts protein L29, and trigger factor when it is bound to the ribosome.

One of the early assembly proteins it binds 23S rRNA. One of the proteins that surrounds the polypeptide exit tunnel on the outside of the ribosome. Forms the main docking site for trigger factor binding to the ribosome. In Desulfatibacillum aliphaticivorans, this protein is Large ribosomal subunit protein uL23.